The sequence spans 117 residues: Large ribosomal subunit protein bL19 (117 aa).

This sequence belongs to the bacterial ribosomal protein bL19 family.

Its function is as follows. This protein is located at the 30S-50S ribosomal subunit interface and may play a role in the structure and function of the aminoacyl-tRNA binding site. This is Large ribosomal subunit protein bL19 from Shewanella piezotolerans (strain WP3 / JCM 13877).